Reading from the N-terminus, the 326-residue chain is MSSTDTLSGQVAAADAEILLAQPRGFCAGVDRAIEIVERAIAMHGAPIYVRHEIVHNKYVVEDLKKKGAIFVEELEEVPSGNTVIFSAHGVSKAVRDEAAVRGLRIYDATCPLVTKVHVEVAKMRQEGVDIVMIGHKGHPEVEGTMGQVERGMHLVESVEDVRRLELPDPERVALVTQTTLSVDDAAEIIGALKAKFPAIREPKKQDICYATQNRQDAVKFMAPQCDVVIVVGSPNSSNSSRLREVAEKRGVAAYMVDAPEQIDPAWVAGKRRIGVTAGASAPEVLAQAVIARLRELGVTNVRALEGIEENVSFPLPRGLNLSSAA.

C27 lines the [4Fe-4S] cluster pocket. The (2E)-4-hydroxy-3-methylbut-2-enyl diphosphate site is built by H56 and H89. Positions 56 and 89 each coordinate dimethylallyl diphosphate. Isopentenyl diphosphate is bound by residues H56 and H89. Residue C111 coordinates [4Fe-4S] cluster. H139 serves as a coordination point for (2E)-4-hydroxy-3-methylbut-2-enyl diphosphate. H139 contributes to the dimethylallyl diphosphate binding site. Position 139 (H139) interacts with isopentenyl diphosphate. E141 serves as the catalytic Proton donor. Residue T179 coordinates (2E)-4-hydroxy-3-methylbut-2-enyl diphosphate. C209 contributes to the [4Fe-4S] cluster binding site. The (2E)-4-hydroxy-3-methylbut-2-enyl diphosphate site is built by S237, S238, N239, and S281. S237, S238, N239, and S281 together coordinate dimethylallyl diphosphate. Residues S237, S238, N239, and S281 each coordinate isopentenyl diphosphate.

It belongs to the IspH family. The cofactor is [4Fe-4S] cluster.

The enzyme catalyses isopentenyl diphosphate + 2 oxidized [2Fe-2S]-[ferredoxin] + H2O = (2E)-4-hydroxy-3-methylbut-2-enyl diphosphate + 2 reduced [2Fe-2S]-[ferredoxin] + 2 H(+). The catalysed reaction is dimethylallyl diphosphate + 2 oxidized [2Fe-2S]-[ferredoxin] + H2O = (2E)-4-hydroxy-3-methylbut-2-enyl diphosphate + 2 reduced [2Fe-2S]-[ferredoxin] + 2 H(+). It participates in isoprenoid biosynthesis; dimethylallyl diphosphate biosynthesis; dimethylallyl diphosphate from (2E)-4-hydroxy-3-methylbutenyl diphosphate: step 1/1. The protein operates within isoprenoid biosynthesis; isopentenyl diphosphate biosynthesis via DXP pathway; isopentenyl diphosphate from 1-deoxy-D-xylulose 5-phosphate: step 6/6. In terms of biological role, catalyzes the conversion of 1-hydroxy-2-methyl-2-(E)-butenyl 4-diphosphate (HMBPP) into a mixture of isopentenyl diphosphate (IPP) and dimethylallyl diphosphate (DMAPP). Acts in the terminal step of the DOXP/MEP pathway for isoprenoid precursor biosynthesis. This chain is 4-hydroxy-3-methylbut-2-enyl diphosphate reductase 1, found in Burkholderia pseudomallei (strain K96243).